The chain runs to 244 residues: NAD-dependent protein deacetylase (244 aa).

Residues 1–244 (MDDKINKLKE…IGKVLGKVID (244 aa)) form the Deacetylase sirtuin-type domain. NAD(+) contacts are provided by Ala-24, Thr-28, Phe-35, Arg-36, Gln-105, Ile-107, Asp-108, and His-123. Phe-35 serves as a coordination point for nicotinamide. Residues Ile-107 and Asp-108 each coordinate nicotinamide. The active-site Proton acceptor is the His-123. Positions 131, 134, 152, and 155 each coordinate Zn(2+). Residues Thr-193, Ser-194, Asn-217, and Ile-235 each coordinate NAD(+).

The protein belongs to the sirtuin family. Class U subfamily. It depends on Zn(2+) as a cofactor.

The protein resides in the cytoplasm. It carries out the reaction N(6)-acetyl-L-lysyl-[protein] + NAD(+) + H2O = 2''-O-acetyl-ADP-D-ribose + nicotinamide + L-lysyl-[protein]. Functionally, NAD-dependent protein deacetylase which modulates the activities of several enzymes which are inactive in their acetylated form. In Clostridium perfringens (strain 13 / Type A), this protein is NAD-dependent protein deacetylase.